A 1103-amino-acid polypeptide reads, in one-letter code: A disintegrin and metalloproteinase with thrombospondin motifs 10 (1103 aa).

Positions 1-25 (MAPACQILRWALALGLGLMFEVTHA) are cleaved as a signal peptide. The propeptide occupies 26 to 233 (FRSQDEFLSS…TERGQPGLKR (208 aa)). N-linked (GlcNAc...) asparagine glycosylation is found at Asn-90, Asn-222, and Asn-323. The interval 213 to 233 (KPPPARPLGNETERGQPGLKR) is disordered. The Peptidase M12B domain occupies 239-457 (RYVETLVVAD…GLGLCLNNRP (219 aa)). 11 cysteine pairs are disulfide-bonded: Cys-315-Cys-376, Cys-351-Cys-358, Cys-370-Cys-452, Cys-409-Cys-436, Cys-479-Cys-501, Cys-490-Cys-508, Cys-496-Cys-531, Cys-521-Cys-536, Cys-559-Cys-596, Cys-563-Cys-601, and Cys-574-Cys-586. His-392 is a binding site for Zn(2+). Residue Glu-393 is part of the active site. Zn(2+) is bound by residues His-396 and His-402. In terms of domain architecture, Disintegrin spans 460-546 (QDFVYPTVAP…VPFGSRPEGV (87 aa)). The region spanning 547 to 602 (DGAWGPWTPWGDCSRTCGGGVSSSSRHCDSPRPTIGGKYCLGERRRHRSCNTDDCP) is the TSP type-1 1 domain. The segment at 706-828 (ETIEGVFSPA…IARDSLPPYS (123 aa)) is spacer. N-linked (GlcNAc...) asparagine glycans are attached at residues Asn-740 and Asn-795. 4 consecutive TSP type-1 domains span residues 825-883 (PPYS…NTEP), 884-945 (CPPD…PTCP), 947-1001 (EWAA…NLRR), and 1003-1058 (PPAR…AKCD). N-linked (GlcNAc...) asparagine glycosylation occurs at Asn-892. A PLAC domain is found at 1065-1103 (GPEECKDVNKVAYCPLVLKFQFCSRAYFRQMCCKTCHGH).

In terms of assembly, interacts with FBN1; this interaction promotes microfibrils assembly. Requires Zn(2+) as cofactor. In terms of processing, glycosylated. Can be O-fucosylated by POFUT2 on a serine or a threonine residue found within the consensus sequence C1-X(2)-(S/T)-C2-G of the TSP type-1 repeat domains where C1 and C2 are the first and second cysteine residue of the repeat, respectively. Fucosylated repeats can then be further glycosylated by the addition of a beta-1,3-glucose residue by the glucosyltransferase, B3GALTL. Fucosylation mediates the efficient secretion of ADAMTS family members. Can also be C-glycosylated with one or two mannose molecules on tryptophan residues within the consensus sequence W-X-X-W of the TPRs, and N-glycosylated. These other glycosylations can also facilitate secretion. As to expression, widely expressed in adult tissues.

It is found in the secreted. The protein localises to the extracellular space. The protein resides in the extracellular matrix. Metalloprotease that participate in microfibrils assembly. Microfibrils are extracellular matrix components occurring independently or along with elastin in the formation of elastic tissues. The sequence is that of A disintegrin and metalloproteinase with thrombospondin motifs 10 (ADAMTS10) from Homo sapiens (Human).